We begin with the raw amino-acid sequence, 347 residues long: 3-isopropylmalate dehydrogenase (347 aa).

Positions 94, 104, 128, and 219 each coordinate substrate. 3 residues coordinate Mg(2+): Asp-219, Asp-243, and Asp-247. 279–291 (GSAPDIAGQGKAD) is an NAD(+) binding site.

It belongs to the isocitrate and isopropylmalate dehydrogenases family. LeuB type 2 subfamily. As to quaternary structure, homodimer. The cofactor is Mg(2+). Mn(2+) serves as cofactor.

It localises to the cytoplasm. The enzyme catalyses (2R,3S)-3-isopropylmalate + NAD(+) = 4-methyl-2-oxopentanoate + CO2 + NADH. The protein operates within amino-acid biosynthesis; L-leucine biosynthesis; L-leucine from 3-methyl-2-oxobutanoate: step 3/4. Catalyzes the oxidation of 3-carboxy-2-hydroxy-4-methylpentanoate (3-isopropylmalate) to 3-carboxy-4-methyl-2-oxopentanoate. The product decarboxylates to 4-methyl-2 oxopentanoate. In Streptomyces coelicolor (strain ATCC BAA-471 / A3(2) / M145), this protein is 3-isopropylmalate dehydrogenase.